A 668-amino-acid chain; its full sequence is Endoplasmic reticulum oxidoreductin-1 (668 aa).

The signal sequence occupies residues 1–22; the sequence is MKPASRLFYLSLFALWSPEAQC. Intrachain disulfides connect C79-C413, C89-C94, C150-C352, and C416-C419. Residues 116 to 142 are disordered; it reads KLEGPRAKHPGKSVQKEEPKRPLQGKL. Residues R186, T188, W199, S282, and H285 each coordinate FAD. N298 and N307 each carry an N-linked (GlcNAc...) asparagine glycan. Position 314 (R314) interacts with FAD. A glycan (N-linked (GlcNAc...) asparagine) is linked at N406. The active-site Nucleophile is the C416. Residue C419 is part of the active site. N443 carries an N-linked (GlcNAc...) asparagine glycan. Disordered stretches follow at residues 488-519 and 554-597; these read VEESEEGQQPQSHEQIEGSENSGAHHIPDRAK and GVTP…DPNF. The segment covering 494 to 509 has biased composition (polar residues); that stretch reads GQQPQSHEQIEGSENS. The span at 570 to 581 shows a compositional bias: acidic residues; sequence DNNDDDDDDDEF.

It belongs to the EROs family. May function both as a monomer and a homodimer. It depends on FAD as a cofactor.

The protein resides in the endoplasmic reticulum membrane. Functionally, essential oxidoreductase that oxidizes proteins in the endoplasmic reticulum to produce disulfide bonds. Acts by oxidizing directly pdi1 isomerase through a direct disulfide exchange. Does not act as a direct oxidant of folding substrate, but relies on pdi1 to transfer oxidizing equivalent. Does not oxidize all pdi related proteins, suggesting that it can discriminate between pdi1 and related proteins. Its reoxidation probably involves electron transfer to molecular oxygen via FAD. Acts independently of glutathione. May be responsible for a significant proportion of reactive oxygen species (ROS) in the cell, thereby being a source of oxidative stress. The protein is Endoplasmic reticulum oxidoreductin-1 (ero-1) of Neurospora crassa (strain ATCC 24698 / 74-OR23-1A / CBS 708.71 / DSM 1257 / FGSC 987).